The sequence spans 194 residues: Nucleoside triphosphate pyrophosphatase (194 aa).

Residue Asp-68 is the Proton acceptor of the active site.

Belongs to the Maf family. It depends on a divalent metal cation as a cofactor.

The protein localises to the cytoplasm. It catalyses the reaction a ribonucleoside 5'-triphosphate + H2O = a ribonucleoside 5'-phosphate + diphosphate + H(+). The enzyme catalyses a 2'-deoxyribonucleoside 5'-triphosphate + H2O = a 2'-deoxyribonucleoside 5'-phosphate + diphosphate + H(+). Its function is as follows. Nucleoside triphosphate pyrophosphatase. May have a dual role in cell division arrest and in preventing the incorporation of modified nucleotides into cellular nucleic acids. The sequence is that of Nucleoside triphosphate pyrophosphatase from Corynebacterium jeikeium (strain K411).